We begin with the raw amino-acid sequence, 346 residues long: Holliday junction branch migration complex subunit RuvB (346 aa).

The segment covering 1–11 (MTEQRTIASSA) has biased composition (polar residues). Residues 1–20 (MTEQRTIASSATREDEAADA) form a disordered region. Residues 1–183 (MTEQRTIASS…FGIVQRLEFY (183 aa)) are large ATPase domain (RuvB-L). Residues Ile-22, Arg-23, Gly-64, Lys-67, Thr-68, Thr-69, 130-132 (EDF), Arg-173, Tyr-183, and Arg-220 each bind ATP. Position 68 (Thr-68) interacts with Mg(2+). The interval 184–254 (SPQELTRIVI…VAQAAMQMLK (71 aa)) is small ATPAse domain (RuvB-S). The tract at residues 257 to 346 (PEGFDELDRR…PAIGEPGDLF (90 aa)) is head domain (RuvB-H). DNA contacts are provided by Arg-293, Arg-312, and Arg-317.

Belongs to the RuvB family. Homohexamer. Forms an RuvA(8)-RuvB(12)-Holliday junction (HJ) complex. HJ DNA is sandwiched between 2 RuvA tetramers; dsDNA enters through RuvA and exits via RuvB. An RuvB hexamer assembles on each DNA strand where it exits the tetramer. Each RuvB hexamer is contacted by two RuvA subunits (via domain III) on 2 adjacent RuvB subunits; this complex drives branch migration. In the full resolvosome a probable DNA-RuvA(4)-RuvB(12)-RuvC(2) complex forms which resolves the HJ.

It localises to the cytoplasm. The catalysed reaction is ATP + H2O = ADP + phosphate + H(+). Its function is as follows. The RuvA-RuvB-RuvC complex processes Holliday junction (HJ) DNA during genetic recombination and DNA repair, while the RuvA-RuvB complex plays an important role in the rescue of blocked DNA replication forks via replication fork reversal (RFR). RuvA specifically binds to HJ cruciform DNA, conferring on it an open structure. The RuvB hexamer acts as an ATP-dependent pump, pulling dsDNA into and through the RuvAB complex. RuvB forms 2 homohexamers on either side of HJ DNA bound by 1 or 2 RuvA tetramers; 4 subunits per hexamer contact DNA at a time. Coordinated motions by a converter formed by DNA-disengaged RuvB subunits stimulates ATP hydrolysis and nucleotide exchange. Immobilization of the converter enables RuvB to convert the ATP-contained energy into a lever motion, pulling 2 nucleotides of DNA out of the RuvA tetramer per ATP hydrolyzed, thus driving DNA branch migration. The RuvB motors rotate together with the DNA substrate, which together with the progressing nucleotide cycle form the mechanistic basis for DNA recombination by continuous HJ branch migration. Branch migration allows RuvC to scan DNA until it finds its consensus sequence, where it cleaves and resolves cruciform DNA. This Xanthomonas campestris pv. campestris (strain B100) protein is Holliday junction branch migration complex subunit RuvB.